Reading from the N-terminus, the 452-residue chain is Isocitrate dehydrogenase [NADP], mitochondrial (452 aa).

A mitochondrion-targeting transit peptide spans 1-39; sequence MAGYLRVVRSLCRASGSGSAWAPAALTAPNLQEQPRRHY. N6-acetyllysine is present on residues K45, K48, K67, and K69. Residues K80 and K106 each carry the N6-acetyllysine; alternate modification. Residues K80 and K106 each carry the N6-succinyllysine; alternate modification. Residues 115-117 and R122 contribute to the NADP(+) site; that span reads TIT. T117 is a binding site for D-threo-isocitrate. D-threo-isocitrate contacts are provided by residues 134-140 and R149; that span reads SPNGTIR. N6-acetyllysine is present on K155. At K166 the chain carries N6-acetyllysine; alternate. N6-succinyllysine; alternate is present on K166. R172 contacts D-threo-isocitrate. An N6-acetyllysine; alternate mark is found at K180 and K193. An N6-succinyllysine; alternate mark is found at K180 and K193. Residue K199 is modified to N6-acetyllysine. The residue at position 256 (K256) is an N6-acetyllysine; alternate. K256 carries the post-translational modification N6-succinyllysine; alternate. 4 positions are modified to N6-acetyllysine: K263, K272, K275, and K280. An N6-acetyllysine; alternate modification is found at K282. N6-succinyllysine; alternate is present on K282. D291 contacts Mn(2+). K299 contributes to the NADP(+) binding site. D314 contacts Mn(2+). NADP(+) contacts are provided by residues 349 to 354 and N367; that span reads GTVTRH. K384 is subject to N6-acetyllysine; alternate. N6-succinyllysine; alternate is present on K384. Residues K400, K413, and K442 each carry the N6-acetyllysine modification.

It belongs to the isocitrate and isopropylmalate dehydrogenases family. As to quaternary structure, homodimer. It depends on Mg(2+) as a cofactor. Mn(2+) is required as a cofactor. Acetylation at Lys-413 dramatically reduces catalytic activity. Deacetylated by SIRT3.

Its subcellular location is the mitochondrion. The catalysed reaction is D-threo-isocitrate + NADP(+) = 2-oxoglutarate + CO2 + NADPH. Plays a role in intermediary metabolism and energy production. It may tightly associate or interact with the pyruvate dehydrogenase complex. The chain is Isocitrate dehydrogenase [NADP], mitochondrial (IDH2) from Bos taurus (Bovine).